Reading from the N-terminus, the 250-residue chain is Sperm-egg fusion protein Juno (250 aa).

The signal sequence occupies residues Met1–Ala19. Intrachain disulfides connect Cys27–Cys55, Cys47–Cys95, Cys56–Cys99, Cys79–Cys172, Cys86–Cys143, Cys132–Cys206, Cys136–Cys186, and Cys149–Cys166. Residues Trp62 to Leu81 are important for interaction with IZUMO1. N-linked (GlcNAc...) asparagine glycosylation occurs at Asn73. Residue Ser228 is the site of GPI-anchor amidated serine attachment. A propeptide spanning residues Ser229 to Ser250 is cleaved from the precursor.

It belongs to the folate receptor family. Monomer. Interacts with IZUMO1; the interaction is direct. IZUMO1 and IZUMO1R/JUNO form a complex with 1:1 stoichiometry. Interacts with FCRL3/MAIA; FCRL3/MAIA replaces IZUMO1R/JUNO as IZUMO1 receptor after sperm-egg adhesion, thereby permitting species-specific gamete fusion. Interacts with WDR54. The protein is rapidly cleaved following fertilization, being only weakly detectable in zona-intact fertilized eggs at telophase II and undetectable at the pronuclear stage. Sheding is probably required to block to polyspermy and ensuring egg fusion with a single sperm. As to expression, expressed in unfertilized oocytes (at protein level).

It is found in the cell membrane. It localises to the cell projection. Its subcellular location is the microvillus membrane. Receptor for IZUMO1 present at the cell surface of oocytes (oolemma), which is essential for species-specific gamete recognition and fertilization. The IZUMO1:IZUMO1R/JUNO interaction is a necessary adhesion event between sperm and egg that is required for fertilization but is not sufficient for cell fusion. The ligand-receptor interaction probably does not act as a membrane 'fusogen'. Does not bind folate. The sequence is that of Sperm-egg fusion protein Juno from Homo sapiens (Human).